Here is a 144-residue protein sequence, read N- to C-terminus: Putative pre-16S rRNA nuclease (144 aa).

This sequence belongs to the YqgF nuclease family.

The protein localises to the cytoplasm. In terms of biological role, could be a nuclease involved in processing of the 5'-end of pre-16S rRNA. The polypeptide is Putative pre-16S rRNA nuclease (Lacticaseibacillus casei (strain BL23) (Lactobacillus casei)).